The sequence spans 344 residues: S-adenosylmethionine:tRNA ribosyltransferase-isomerase (344 aa).

This sequence belongs to the QueA family. Monomer.

The protein resides in the cytoplasm. It catalyses the reaction 7-aminomethyl-7-carbaguanosine(34) in tRNA + S-adenosyl-L-methionine = epoxyqueuosine(34) in tRNA + adenine + L-methionine + 2 H(+). It functions in the pathway tRNA modification; tRNA-queuosine biosynthesis. Its function is as follows. Transfers and isomerizes the ribose moiety from AdoMet to the 7-aminomethyl group of 7-deazaguanine (preQ1-tRNA) to give epoxyqueuosine (oQ-tRNA). This Levilactobacillus brevis (strain ATCC 367 / BCRC 12310 / CIP 105137 / JCM 1170 / LMG 11437 / NCIMB 947 / NCTC 947) (Lactobacillus brevis) protein is S-adenosylmethionine:tRNA ribosyltransferase-isomerase.